A 498-amino-acid polypeptide reads, in one-letter code: ATP synthase subunit beta, chloroplastic (498 aa).

172 to 179 (GGAGVGKT) is an ATP binding site.

This sequence belongs to the ATPase alpha/beta chains family. In terms of assembly, F-type ATPases have 2 components, CF(1) - the catalytic core - and CF(0) - the membrane proton channel. CF(1) has five subunits: alpha(3), beta(3), gamma(1), delta(1), epsilon(1). CF(0) has four main subunits: a(1), b(1), b'(1) and c(9-12).

The protein localises to the plastid. It is found in the chloroplast thylakoid membrane. It catalyses the reaction ATP + H2O + 4 H(+)(in) = ADP + phosphate + 5 H(+)(out). Produces ATP from ADP in the presence of a proton gradient across the membrane. The catalytic sites are hosted primarily by the beta subunits. This chain is ATP synthase subunit beta, chloroplastic, found in Populus alba (White poplar).